A 125-amino-acid polypeptide reads, in one-letter code: Holo-[acyl-carrier-protein] synthase (125 aa).

The Mg(2+) site is built by D8 and E57.

The protein belongs to the P-Pant transferase superfamily. AcpS family. Mg(2+) is required as a cofactor.

It localises to the cytoplasm. It carries out the reaction apo-[ACP] + CoA = holo-[ACP] + adenosine 3',5'-bisphosphate + H(+). Transfers the 4'-phosphopantetheine moiety from coenzyme A to a Ser of acyl-carrier-protein. This is Holo-[acyl-carrier-protein] synthase from Blochmanniella pennsylvanica (strain BPEN).